The chain runs to 458 residues: tRNA modification GTPase MnmE (458 aa).

The (6S)-5-formyl-5,6,7,8-tetrahydrofolate site is built by R22, E86, and R125. Residues 221 to 379 form the TrmE-type G domain; sequence GIRTVILGRP…LEQTITEMFF (159 aa). Residue N231 participates in K(+) binding. Residues 231-236, 250-256, and 275-278 contribute to the GTP site; these read NAGKSS, TEIAGTT, and DTAG. S235 is a binding site for Mg(2+). 3 residues coordinate K(+): T250, I252, and T255. T256 contributes to the Mg(2+) binding site. K458 provides a ligand contact to (6S)-5-formyl-5,6,7,8-tetrahydrofolate.

This sequence belongs to the TRAFAC class TrmE-Era-EngA-EngB-Septin-like GTPase superfamily. TrmE GTPase family. In terms of assembly, homodimer. Heterotetramer of two MnmE and two MnmG subunits. It depends on K(+) as a cofactor.

It localises to the cytoplasm. Exhibits a very high intrinsic GTPase hydrolysis rate. Involved in the addition of a carboxymethylaminomethyl (cmnm) group at the wobble position (U34) of certain tRNAs, forming tRNA-cmnm(5)s(2)U34. In Lachnoclostridium phytofermentans (strain ATCC 700394 / DSM 18823 / ISDg) (Clostridium phytofermentans), this protein is tRNA modification GTPase MnmE.